The sequence spans 75 residues: MTDKIIQQLEARINDLECQLAFQEQTIEDLNGALSQQQLQITKMLDQMKYVVGKVKNMDSSNLADPSEETPPPHY.

The protein belongs to the SlyX family.

The protein is Protein SlyX homolog of Vibrio campbellii (strain ATCC BAA-1116).